We begin with the raw amino-acid sequence, 494 residues long: Probable cytosol aminopeptidase (494 aa).

Residues K260 and D265 each contribute to the Mn(2+) site. K272 is a catalytic residue. 3 residues coordinate Mn(2+): D283, D342, and E344. R346 is a catalytic residue.

It belongs to the peptidase M17 family. It depends on Mn(2+) as a cofactor.

It is found in the cytoplasm. The catalysed reaction is Release of an N-terminal amino acid, Xaa-|-Yaa-, in which Xaa is preferably Leu, but may be other amino acids including Pro although not Arg or Lys, and Yaa may be Pro. Amino acid amides and methyl esters are also readily hydrolyzed, but rates on arylamides are exceedingly low.. It carries out the reaction Release of an N-terminal amino acid, preferentially leucine, but not glutamic or aspartic acids.. Functionally, presumably involved in the processing and regular turnover of intracellular proteins. Catalyzes the removal of unsubstituted N-terminal amino acids from various peptides. The protein is Probable cytosol aminopeptidase of Bacillus cereus (strain ZK / E33L).